The following is a 200-amino-acid chain: Putative AgrB-like protein (200 aa).

A run of 5 helical transmembrane segments spans residues 49–69, 88–108, 114–134, 148–168, and 171–191; these read LIIT…LVFM, LLCT…IQFT, LFRF…SPAV, ALKH…FLVS, and LGTI…PLKG.

The protein belongs to the AgrB family.

Its subcellular location is the cell membrane. Its function is as follows. May be involved in the proteolytic processing of a quorum sensing system signal molecule precursor. This chain is Putative AgrB-like protein, found in Lactiplantibacillus plantarum (strain ATCC BAA-793 / NCIMB 8826 / WCFS1) (Lactobacillus plantarum).